The following is a 640-amino-acid chain: Threonine--tRNA ligase (640 aa).

The TGS domain maps to 1–60; the sequence is MKITFPDGAVKEFEPGVSTADIAASISPGLKKKALAGKLNGELLDLVTPIHEDGAIEIVT. The tract at residues 241–538 is catalytic; sequence DHRKLGKELE…LIEEYKGAFP (298 aa). Residues Cys-334, His-385, and His-515 each coordinate Zn(2+).

The protein belongs to the class-II aminoacyl-tRNA synthetase family. As to quaternary structure, homodimer. Zn(2+) serves as cofactor.

The protein resides in the cytoplasm. It carries out the reaction tRNA(Thr) + L-threonine + ATP = L-threonyl-tRNA(Thr) + AMP + diphosphate + H(+). In terms of biological role, catalyzes the attachment of threonine to tRNA(Thr) in a two-step reaction: L-threonine is first activated by ATP to form Thr-AMP and then transferred to the acceptor end of tRNA(Thr). Also edits incorrectly charged L-seryl-tRNA(Thr). The sequence is that of Threonine--tRNA ligase from Listeria monocytogenes serovar 1/2a (strain ATCC BAA-679 / EGD-e).